Consider the following 358-residue polypeptide: Phenylalanine--tRNA ligase alpha subunit (358 aa).

Position 258 (E258) interacts with Mg(2+).

The protein belongs to the class-II aminoacyl-tRNA synthetase family. Phe-tRNA synthetase alpha subunit type 1 subfamily. As to quaternary structure, tetramer of two alpha and two beta subunits. It depends on Mg(2+) as a cofactor.

It is found in the cytoplasm. The enzyme catalyses tRNA(Phe) + L-phenylalanine + ATP = L-phenylalanyl-tRNA(Phe) + AMP + diphosphate + H(+). This Rhodospirillum rubrum (strain ATCC 11170 / ATH 1.1.1 / DSM 467 / LMG 4362 / NCIMB 8255 / S1) protein is Phenylalanine--tRNA ligase alpha subunit.